The sequence spans 227 residues: ATP synthase F(0) complex subunit a (227 aa).

6 helical membrane passes run 14–34 (FLGI…FPTP), 69–89 (WAIL…LGLL), 99–119 (LSLN…IGMF), 139–159 (VPVL…ALGV), 165–185 (LTAG…LLTM), and 190–210 (ALLT…VAMI).

It belongs to the ATPase A chain family. Component of the ATP synthase complex composed at least of ATP5F1A/subunit alpha, ATP5F1B/subunit beta, ATP5MC1/subunit c (homooctomer), MT-ATP6/subunit a, MT-ATP8/subunit 8, ATP5ME/subunit e, ATP5MF/subunit f, ATP5MG/subunit g, ATP5MK/subunit k, ATP5MJ/subunit j, ATP5F1C/subunit gamma, ATP5F1D/subunit delta, ATP5F1E/subunit epsilon, ATP5PF/subunit F6, ATP5PB/subunit b, ATP5PD/subunit d, ATP5PO/subunit OSCP. ATP synthase complex consists of a soluble F(1) head domain (subunits alpha(3) and beta(3)) - the catalytic core - and a membrane F(0) domain - the membrane proton channel (subunits c, a, 8, e, f, g, k and j). These two domains are linked by a central stalk (subunits gamma, delta, and epsilon) rotating inside the F1 region and a stationary peripheral stalk (subunits F6, b, d, and OSCP). Interacts with DNAJC30; interaction is direct.

Its subcellular location is the mitochondrion inner membrane. It catalyses the reaction H(+)(in) = H(+)(out). In terms of biological role, subunit a, of the mitochondrial membrane ATP synthase complex (F(1)F(0) ATP synthase or Complex V) that produces ATP from ADP in the presence of a proton gradient across the membrane which is generated by electron transport complexes of the respiratory chain. ATP synthase complex consist of a soluble F(1) head domain - the catalytic core - and a membrane F(1) domain - the membrane proton channel. These two domains are linked by a central stalk rotating inside the F(1) region and a stationary peripheral stalk. During catalysis, ATP synthesis in the catalytic domain of F(1) is coupled via a rotary mechanism of the central stalk subunits to proton translocation. With the subunit c (ATP5MC1), forms the proton-conducting channel in the F(0) domain, that contains two crucial half-channels (inlet and outlet) that facilitate proton movement from the mitochondrial intermembrane space (IMS) into the matrix. Protons are taken up via the inlet half-channel and released through the outlet half-channel, following a Grotthuss mechanism. The protein is ATP synthase F(0) complex subunit a of Scyliorhinus canicula (Small-spotted catshark).